A 378-amino-acid polypeptide reads, in one-letter code: Cobalt-precorrin-5B C(1)-methyltransferase (378 aa).

This sequence belongs to the CbiD family.

It catalyses the reaction Co-precorrin-5B + S-adenosyl-L-methionine = Co-precorrin-6A + S-adenosyl-L-homocysteine. It functions in the pathway cofactor biosynthesis; adenosylcobalamin biosynthesis; cob(II)yrinate a,c-diamide from sirohydrochlorin (anaerobic route): step 6/10. Functionally, catalyzes the methylation of C-1 in cobalt-precorrin-5B to form cobalt-precorrin-6A. This is Cobalt-precorrin-5B C(1)-methyltransferase from Tolumonas auensis (strain DSM 9187 / NBRC 110442 / TA 4).